Reading from the N-terminus, the 349-residue chain is Sensory histidine kinase/phosphatase NtrB (349 aa).

The region spanning 5 to 78 (IQPDAGQILN…SLAAGQGFTD (74 aa)) is the PAS domain. The Histidine kinase domain occupies 136-349 (GLAHEIKNPL…EFSVYLPIRK (214 aa)). His-139 carries the phosphohistidine; by autocatalysis modification. Lys-329 provides a ligand contact to ATP.

In terms of processing, autophosphorylated.

It is found in the cytoplasm. The catalysed reaction is ATP + protein L-histidine = ADP + protein N-phospho-L-histidine.. Member of the two-component regulatory system NtrB/NtrC, which controls expression of the nitrogen-regulated (ntr) genes in response to nitrogen limitation. Under conditions of nitrogen limitation, NtrB autophosphorylates and transfers the phosphoryl group to NtrC. In the presence of nitrogen, acts as a phosphatase that dephosphorylates and inactivates NtrC. The chain is Sensory histidine kinase/phosphatase NtrB (glnL) from Salmonella typhi.